Here is an 839-residue protein sequence, read N- to C-terminus: Protein translocase subunit SecA (839 aa).

ATP-binding positions include Q85, 103–107 (GEGKT), and D493. Basic and acidic residues predominate over residues 780–790 (QIHEQERERAS). Positions 780–839 (QIHEQERERASQRATTAAPQNIQSQQSANTDDLPKVERNEACPCGSGKKFKNCHGRKSFS) are disordered. Over residues 791 to 809 (QRATTAAPQNIQSQQSANT) the composition is skewed to polar residues. Zn(2+) contacts are provided by C821, C823, C832, and H833. Residues 827–839 (KKFKNCHGRKSFS) show a composition bias toward basic residues.

Belongs to the SecA family. In terms of assembly, monomer and homodimer. Part of the essential Sec protein translocation apparatus which comprises SecA, SecYEG and auxiliary proteins SecDF. Other proteins may also be involved. Zn(2+) is required as a cofactor.

The protein localises to the cell membrane. It localises to the cytoplasm. It carries out the reaction ATP + H2O + cellular proteinSide 1 = ADP + phosphate + cellular proteinSide 2.. In terms of biological role, part of the Sec protein translocase complex. Interacts with the SecYEG preprotein conducting channel. Has a central role in coupling the hydrolysis of ATP to the transfer of proteins into and across the cell membrane, serving as an ATP-driven molecular motor driving the stepwise translocation of polypeptide chains across the membrane. This is Protein translocase subunit SecA from Streptococcus pyogenes serotype M3 (strain ATCC BAA-595 / MGAS315).